We begin with the raw amino-acid sequence, 131 residues long: Small ribosomal subunit protein bS6 (131 aa).

Residue Lys-93 is modified to N6-acetyllysine. Residues Glu-98–Glu-131 form a disordered region. Residues Lys-104–Phe-116 are compositionally biased toward basic and acidic residues. Over residues Thr-120 to Glu-131 the composition is skewed to acidic residues.

Belongs to the bacterial ribosomal protein bS6 family.

Functionally, binds together with bS18 to 16S ribosomal RNA. This Escherichia fergusonii (strain ATCC 35469 / DSM 13698 / CCUG 18766 / IAM 14443 / JCM 21226 / LMG 7866 / NBRC 102419 / NCTC 12128 / CDC 0568-73) protein is Small ribosomal subunit protein bS6.